The following is a 274-amino-acid chain: Nitrogenase iron protein (274 aa).

8 to 15 is a binding site for ATP; that stretch reads GKGGIGKS. Cysteine 94 contacts [4Fe-4S] cluster. Position 97 is an ADP-ribosylarginine; by dinitrogenase reductase ADP-ribosyltransferase (arginine 97). Position 131 (cysteine 131) interacts with [4Fe-4S] cluster.

The protein belongs to the NifH/BchL/ChlL family. In terms of assembly, homodimer. It depends on [4Fe-4S] cluster as a cofactor. The reversible ADP-ribosylation of Arg-97 inactivates the nitrogenase reductase and regulates nitrogenase activity.

It carries out the reaction N2 + 8 reduced [2Fe-2S]-[ferredoxin] + 16 ATP + 16 H2O = H2 + 8 oxidized [2Fe-2S]-[ferredoxin] + 2 NH4(+) + 16 ADP + 16 phosphate + 6 H(+). Its function is as follows. The key enzymatic reactions in nitrogen fixation are catalyzed by the nitrogenase complex, which has 2 components: the iron protein and the molybdenum-iron protein. This is Nitrogenase iron protein from Pelodictyon phaeoclathratiforme (strain DSM 5477 / BU-1).